Consider the following 178-residue polypeptide: Ribosome maturation factor RimP (178 aa).

Belongs to the RimP family.

The protein resides in the cytoplasm. In terms of biological role, required for maturation of 30S ribosomal subunits. In Cutibacterium acnes (strain DSM 16379 / KPA171202) (Propionibacterium acnes), this protein is Ribosome maturation factor RimP.